A 525-amino-acid polypeptide reads, in one-letter code: ATP synthase subunit alpha (525 aa).

169-176 (GDRQTGKT) is an ATP binding site.

This sequence belongs to the ATPase alpha/beta chains family. In terms of assembly, F-type ATPases have 2 components, CF(1) - the catalytic core - and CF(0) - the membrane proton channel. CF(1) has five subunits: alpha(3), beta(3), gamma(1), delta(1), epsilon(1). CF(0) has three main subunits: a(1), b(2) and c(9-12). The alpha and beta chains form an alternating ring which encloses part of the gamma chain. CF(1) is attached to CF(0) by a central stalk formed by the gamma and epsilon chains, while a peripheral stalk is formed by the delta and b chains.

Its subcellular location is the cell membrane. It carries out the reaction ATP + H2O + 4 H(+)(in) = ADP + phosphate + 5 H(+)(out). Functionally, produces ATP from ADP in the presence of a proton gradient across the membrane. The alpha chain is a regulatory subunit. This is ATP synthase subunit alpha from Mycoplasma mycoides subsp. mycoides SC (strain CCUG 32753 / NCTC 10114 / PG1).